The chain runs to 1805 residues: Kinesin-like protein KIF13A (1805 aa).

The Kinesin motor domain maps to 5–352 (KVKVAVRVRP…LRYADRAKRI (348 aa)). ATP is bound at residue 102-109 (GQTGSGKS). Residues 359–436 (NEDPNAKVIR…QLESMGISLE (78 aa)) are a coiled coil. One can recognise an FHA domain in the interval 469–519 (HTRVGADTSQDIQLFGIGIQPQHCEIDIASDGDVTLTPKENARSCVNGTLV). Residues 556–567 (EKETGPPEHDLD) are compositionally biased toward basic and acidic residues. Disordered stretches follow at residues 556-575 (EKET…ASSE) and 633-656 (QQLS…SQTA). Coiled-coil stretches lie at residues 602 to 775 (VQVL…LYGK) and 1100 to 1138 (DALI…EQWV). At Ser-636 the chain carries Phosphoserine. Position 1287 is a phosphoserine (Ser-1287). Over residues 1385-1396 (TPNVHNVSSSRP) the composition is skewed to polar residues. Residues 1385–1404 (TPNVHNVSSSRPDLSGFDED) are disordered. Ser-1454, Ile-1481, Ser-1490, and Met-1494 each carry phosphoserine. The interval 1507-1531 (PSGSNGSSMPVEHNSKREKKIDSEE) is disordered. The stretch at 1518 to 1547 (EHNSKREKKIDSEEEENELEAINRKLISSQ) forms a coiled coil. The span at 1519 to 1528 (HNSKREKKID) shows a compositional bias: basic and acidic residues. 2 positions are modified to phosphoserine: Ser-1529 and Ser-1572. The span at 1612–1621 (MVVPSSDSSD) shows a compositional bias: low complexity. Residues 1612–1645 (MVVPSSDSSDQLAIQTKDADSTEHSTPSLVHDFR) are disordered. A phosphoserine mark is found at Ser-1648 and Ser-1698. The disordered stretch occupies residues 1749 to 1779 (GLTDSSAGELSSRRSLPNKTGGKTVSDGLHH). The span at 1751–1771 (TDSSAGELSSRRSLPNKTGGK) shows a compositional bias: polar residues.

The protein belongs to the TRAFAC class myosin-kinesin ATPase superfamily. Kinesin family. Interacts with AP2B1. Interacts with ZFYVE26. Interacts with AP1G1 and AP1G2. As to expression, widely expressed, with highest levels in heart, brain and skeletal muscle.

Its subcellular location is the cytoplasm. The protein localises to the cytoskeleton. It is found in the microtubule organizing center. It localises to the centrosome. The protein resides in the midbody. Its subcellular location is the endosome membrane. The protein localises to the golgi apparatus membrane. Functionally, plus end-directed microtubule-dependent motor protein involved in intracellular transport and regulating various processes such as mannose-6-phosphate receptor (M6PR) transport to the plasma membrane, endosomal sorting during melanosome biogenesis and cytokinesis. Mediates the transport of M6PR-containing vesicles from trans-Golgi network to the plasma membrane via direct interaction with the AP-1 complex. During melanosome maturation, required for delivering melanogenic enzymes from recycling endosomes to nascent melanosomes by creating peripheral recycling endosomal subdomains in melanocytes. Also required for the abscission step in cytokinesis: mediates translocation of ZFYVE26, and possibly TTC19, to the midbody during cytokinesis. The sequence is that of Kinesin-like protein KIF13A (KIF13A) from Homo sapiens (Human).